A 252-amino-acid polypeptide reads, in one-letter code: 2-succinyl-6-hydroxy-2,4-cyclohexadiene-1-carboxylate synthase (252 aa).

The protein belongs to the AB hydrolase superfamily. MenH family. As to quaternary structure, monomer.

The enzyme catalyses 5-enolpyruvoyl-6-hydroxy-2-succinyl-cyclohex-3-ene-1-carboxylate = (1R,6R)-6-hydroxy-2-succinyl-cyclohexa-2,4-diene-1-carboxylate + pyruvate. It participates in quinol/quinone metabolism; 1,4-dihydroxy-2-naphthoate biosynthesis; 1,4-dihydroxy-2-naphthoate from chorismate: step 3/7. The protein operates within quinol/quinone metabolism; menaquinone biosynthesis. In terms of biological role, catalyzes a proton abstraction reaction that results in 2,5-elimination of pyruvate from 2-succinyl-5-enolpyruvyl-6-hydroxy-3-cyclohexene-1-carboxylate (SEPHCHC) and the formation of 2-succinyl-6-hydroxy-2,4-cyclohexadiene-1-carboxylate (SHCHC). This chain is 2-succinyl-6-hydroxy-2,4-cyclohexadiene-1-carboxylate synthase, found in Klebsiella pneumoniae subsp. pneumoniae (strain ATCC 700721 / MGH 78578).